Here is a 266-residue protein sequence, read N- to C-terminus: Putative hydro-lyase Jann_2570 (266 aa).

It belongs to the D-glutamate cyclase family.

This is Putative hydro-lyase Jann_2570 from Jannaschia sp. (strain CCS1).